Reading from the N-terminus, the 310-residue chain is Malate dehydrogenase (310 aa).

NAD(+)-binding positions include 7–12 and Asp-32; that span reads GAGNVG. Residues Arg-81 and Arg-87 each contribute to the substrate site. NAD(+) is bound by residues Asn-94 and 117–119; that span reads VSN. Substrate-binding residues include Asn-119 and Arg-150. The active-site Proton acceptor is His-174.

It belongs to the LDH/MDH superfamily. MDH type 3 family. Homotetramer; arranged as a dimer of dimers.

The enzyme catalyses (S)-malate + NAD(+) = oxaloacetate + NADH + H(+). In terms of biological role, catalyzes the reversible oxidation of malate to oxaloacetate. In Chlorobaculum tepidum (strain ATCC 49652 / DSM 12025 / NBRC 103806 / TLS) (Chlorobium tepidum), this protein is Malate dehydrogenase.